A 166-amino-acid polypeptide reads, in one-letter code: Transcription antitermination protein NusB (166 aa).

Over residues 1-18 (MISDESDRFNPRDPKPAD) the composition is skewed to basic and acidic residues. The tract at residues 1–30 (MISDESDRFNPRDPKPADAGKPSKSAKRRE) is disordered.

Belongs to the NusB family.

Involved in transcription antitermination. Required for transcription of ribosomal RNA (rRNA) genes. Binds specifically to the boxA antiterminator sequence of the ribosomal RNA (rrn) operons. This chain is Transcription antitermination protein NusB, found in Pseudomonas entomophila (strain L48).